A 233-amino-acid chain; its full sequence is ATP synthase subunit a 2 (233 aa).

5 helical membrane-spanning segments follow: residues 15–35, 78–98, 107–127, 169–189, and 194–214; these read FVVI…LVIG, YLAF…LTVV, SLST…IYGI, IMSG…FVPV, and LGLV…LVYI.

This sequence belongs to the ATPase A chain family. As to quaternary structure, F-type ATPases have 2 components, CF(1) - the catalytic core - and CF(0) - the membrane proton channel. CF(1) has five subunits: alpha(3), beta(3), gamma(1), delta(1), epsilon(1). CF(0) has four main subunits: a, b, b' and c.

It is found in the cellular thylakoid membrane. Key component of the proton channel; it plays a direct role in the translocation of protons across the membrane. This chain is ATP synthase subunit a 2, found in Picosynechococcus sp. (strain ATCC 27264 / PCC 7002 / PR-6) (Agmenellum quadruplicatum).